The following is a 171-amino-acid chain: Nicotinamide-nucleotide adenylyltransferase (171 aa).

This sequence belongs to the archaeal NMN adenylyltransferase family.

It is found in the cytoplasm. It carries out the reaction beta-nicotinamide D-ribonucleotide + ATP + H(+) = diphosphate + NAD(+). The protein operates within cofactor biosynthesis; NAD(+) biosynthesis; NAD(+) from nicotinamide D-ribonucleotide: step 1/1. This Methanococcus maripaludis (strain C5 / ATCC BAA-1333) protein is Nicotinamide-nucleotide adenylyltransferase.